Reading from the N-terminus, the 252-residue chain is Flap endonuclease Xni (252 aa).

Residue Asp103 participates in Mg(2+) binding. The 5'-3' exonuclease domain occupies 159-248 (VLPEQLPDYW…LKGNLQQLRL (90 aa)). Residues Leu170, Ala171, Pro179, Ile181, and Ile184 each coordinate K(+). The segment at 183-188 (GIGPKT) is interaction with DNA.

It belongs to the Xni family. The cofactor is Mg(2+). K(+) is required as a cofactor.

Has flap endonuclease activity. During DNA replication, flap endonucleases cleave the 5'-overhanging flap structure that is generated by displacement synthesis when DNA polymerase encounters the 5'-end of a downstream Okazaki fragment. The chain is Flap endonuclease Xni from Photorhabdus laumondii subsp. laumondii (strain DSM 15139 / CIP 105565 / TT01) (Photorhabdus luminescens subsp. laumondii).